Consider the following 90-residue polypeptide: Antitoxin epsilon (90 aa).

It belongs to the epsilon antitoxin family. As to quaternary structure, in the presence of the zeta toxin, forms an inactive PezA(2)PezT(2) heterotetramer. The heterotetramer is still able to bind the zeta toxin substrate UNAG.

Functionally, antitoxin component of a type II toxin-antitoxin (TA) system. Neutralizes the toxic effect of cognate zeta toxin. Part of a postsegregational killing (PSK) system involved in the killing of plasmid-free cells. Continuous synthesis of the epsilon antitoxin is required to counteract the zeta toxin. In Streptococcus pyogenes, this protein is Antitoxin epsilon.